We begin with the raw amino-acid sequence, 542 residues long: Putative cysteine ligase BshC (542 aa).

The stretch at 458 to 479 forms a coiled coil; the sequence is LTKNATLLQAQIDFLHQTLQRA.

The protein belongs to the BshC family.

In terms of biological role, involved in bacillithiol (BSH) biosynthesis. May catalyze the last step of the pathway, the addition of cysteine to glucosamine malate (GlcN-Mal) to generate BSH. The chain is Putative cysteine ligase BshC from Geobacillus sp. (strain WCH70).